A 341-amino-acid chain; its full sequence is L-threonine 3-dehydrogenase (341 aa).

Residue C38 participates in Zn(2+) binding. Active-site charge relay system residues include T40 and H43. Residues H63, E64, C93, C96, C99, and C107 each contribute to the Zn(2+) site. Residues I175, D195, R200, 262–264 (LGI), and 286–287 (IY) contribute to the NAD(+) site.

It belongs to the zinc-containing alcohol dehydrogenase family. Homotetramer. The cofactor is Zn(2+).

It is found in the cytoplasm. The catalysed reaction is L-threonine + NAD(+) = (2S)-2-amino-3-oxobutanoate + NADH + H(+). The protein operates within amino-acid degradation; L-threonine degradation via oxydo-reductase pathway; glycine from L-threonine: step 1/2. Catalyzes the NAD(+)-dependent oxidation of L-threonine to 2-amino-3-ketobutyrate. The sequence is that of L-threonine 3-dehydrogenase from Escherichia coli O17:K52:H18 (strain UMN026 / ExPEC).